The following is a 131-amino-acid chain: Holo-[acyl-carrier-protein] synthase (131 aa).

Positions 8 and 63 each coordinate Mg(2+).

This sequence belongs to the P-Pant transferase superfamily. AcpS family. Mg(2+) serves as cofactor.

Its subcellular location is the cytoplasm. It catalyses the reaction apo-[ACP] + CoA = holo-[ACP] + adenosine 3',5'-bisphosphate + H(+). Transfers the 4'-phosphopantetheine moiety from coenzyme A to a Ser of acyl-carrier-protein. The polypeptide is Holo-[acyl-carrier-protein] synthase (Shewanella pealeana (strain ATCC 700345 / ANG-SQ1)).